The primary structure comprises 86 residues: Sec-independent protein translocase protein TatA (86 aa).

A helical membrane pass occupies residues 1–21; sequence MGISIWQLLIILAIVLVLFGA.

This sequence belongs to the TatA/E family. The Tat system comprises two distinct complexes: a TatABC complex, containing multiple copies of TatA, TatB and TatC subunits, and a separate TatA complex, containing only TatA subunits. Substrates initially bind to the TatABC complex, which probably triggers association of the separate TatA complex to form the active translocon.

The protein resides in the cell inner membrane. Its function is as follows. Part of the twin-arginine translocation (Tat) system that transports large folded proteins containing a characteristic twin-arginine motif in their signal peptide across membranes. TatA could form the protein-conducting channel of the Tat system. This is Sec-independent protein translocase protein TatA from Hydrogenovibrio crunogenus (strain DSM 25203 / XCL-2) (Thiomicrospira crunogena).